The chain runs to 747 residues: Protein tyrosine phosphatase domain-containing protein 1 (747 aa).

The disordered stretch occupies residues 1–36 (MAAGVLPQNEDPYSTLVNSSGHAAHMDENSGRPAPK). Over residues 11–21 (DPYSTLVNSSG) the composition is skewed to polar residues. A Tyrosine-protein phosphatase domain is found at 82–253 (YSSWVTDNIL…LAPLRNIFSC (172 aa)). Residue Cys-190 is the Phosphocysteine intermediate of the active site. Phosphoserine occurs at positions 392, 394, and 543. The segment at 549–570 (SSPKAQFPHGQETQDSTDLSEA) is disordered.

The protein belongs to the protein-tyrosine phosphatase family. Non-receptor class PTPDC1 subfamily.

Functionally, may play roles in cilia formation and/or maintenance. This is Protein tyrosine phosphatase domain-containing protein 1 (Ptpdc1) from Mus musculus (Mouse).